A 428-amino-acid polypeptide reads, in one-letter code: Sarcosine reductase complex component B subunit alpha (428 aa).

Cysteine 242 is modified (pyruvic acid (Cys)).

As to quaternary structure, heterotetramer of two alpha and two beta subunits. Component of the sarcosine reductase complex, together with components A and C. PB is substrate specific. In terms of processing, the peptide chain is cleaved into beta and alpha chains, and the alpha chain N-terminal cysteine is deaminated and oxidized to form a reactive pyruvoyl group.

The enzyme catalyses acetyl phosphate + methylamine + [thioredoxin]-disulfide + H2O = sarcosine + [thioredoxin]-dithiol + phosphate + H(+). In terms of biological role, in the first step of sarcosine reductase, the substrate is bound to component PB via a Schiff base intermediate. Then the PB-activated substrate is nucleophilically attacked by the selenol anion of component PA to transform it to a carboxymethylated selenoether and the respective amine. By action of component PC, acetyl phosphate is formed, leaving component PA in its oxidized state. Finally component PA becomes reduced by the thioredoxin system to start a new catalytic cycle of reductive deamination. In Peptoclostridium acidaminophilum (Eubacterium acidaminophilum), this protein is Sarcosine reductase complex component B subunit alpha (grdG).